Here is a 416-residue protein sequence, read N- to C-terminus: FBD-associated F-box protein At3g52670 (416 aa).

The region spanning 9 to 62 (EDRMNQLPEDLILRILSFLPTELVIATSVLSKQWRSLWKLVPNLEFDSDDYESE) is the F-box domain. An FBD domain is found at 327 to 378 (KWNEPKYVPECLLSHLETFVWIRYDWEREEEKEVATYILRNARWLKKGTIST).

The chain is FBD-associated F-box protein At3g52670 from Arabidopsis thaliana (Mouse-ear cress).